Consider the following 299-residue polypeptide: ATP phosphoribosyltransferase (299 aa).

It belongs to the ATP phosphoribosyltransferase family. Long subfamily. As to quaternary structure, equilibrium between an active dimeric form, an inactive hexameric form and higher aggregates. Interconversion between the various forms is largely reversible and is influenced by the natural substrates and inhibitors of the enzyme. The cofactor is Mg(2+).

Its subcellular location is the cytoplasm. The enzyme catalyses 1-(5-phospho-beta-D-ribosyl)-ATP + diphosphate = 5-phospho-alpha-D-ribose 1-diphosphate + ATP. The protein operates within amino-acid biosynthesis; L-histidine biosynthesis; L-histidine from 5-phospho-alpha-D-ribose 1-diphosphate: step 1/9. With respect to regulation, feedback inhibited by histidine. Functionally, catalyzes the condensation of ATP and 5-phosphoribose 1-diphosphate to form N'-(5'-phosphoribosyl)-ATP (PR-ATP). Has a crucial role in the pathway because the rate of histidine biosynthesis seems to be controlled primarily by regulation of HisG enzymatic activity. The polypeptide is ATP phosphoribosyltransferase (Escherichia coli O7:K1 (strain IAI39 / ExPEC)).